Reading from the N-terminus, the 238-residue chain is MSNSLLTQPTQESVQQIFARIAPQYDDLNTFLSFGQHHIWKAMAVKWSGVSPGDRLLDVCCGSGDLAFQGAKVVGTRGKVVGLDFCAELLAIAAGKHKSKYAHLPMQWLQGDALALPFSDNEFDGATMGYGLRNVGNIPQALTELQRVLKPGKKVAILDFHQPGNALAANFQRWYLANVVVPMAKQWRLTEEYAYLQPSLDRFPTGPKQVQFALEVGFAKAVHYPIAAGLMGVLVAEK.

Belongs to the class I-like SAM-binding methyltransferase superfamily. MenG/UbiE family.

It catalyses the reaction demethylphylloquinol + S-adenosyl-L-methionine = phylloquinol + S-adenosyl-L-homocysteine + H(+). The protein operates within cofactor biosynthesis; phylloquinone biosynthesis. In terms of biological role, methyltransferase required for the conversion of 2-phytyl-1,4-beta-naphthoquinol to phylloquinol. The sequence is that of 2-phytyl-1,4-naphtoquinone methyltransferase from Synechocystis sp. (strain ATCC 27184 / PCC 6803 / Kazusa).